The primary structure comprises 125 residues: Lymphocyte antigen 6 complex locus protein G6c (125 aa).

The N-terminal stretch at 1–18 (MRALLLLSLSALLCWVSA) is a signal peptide. The region spanning 20 to 111 (IRCHSCYKLP…PRPTPALTLV (92 aa)) is the UPAR/Ly6 domain. Intrachain disulfides connect Cys22–Cys47, Cys25–Cys33, and Cys39–Cys65. Asn88 carries N-linked (GlcNAc...) asparagine glycosylation. Cysteines 92 and 97 form a disulfide. The GPI-anchor amidated serine moiety is linked to residue Ser99. A propeptide spans 100–125 (PAPRPTPALTLVFLTSLAGLGLWLLH) (removed in mature form).

Post-translationally, N-glycosylated.

The protein localises to the cell membrane. The chain is Lymphocyte antigen 6 complex locus protein G6c (LY6G6C) from Bos taurus (Bovine).